The following is a 510-amino-acid chain: Maturase K (510 aa).

The protein belongs to the intron maturase 2 family. MatK subfamily.

Its subcellular location is the plastid. The protein resides in the chloroplast. In terms of biological role, usually encoded in the trnK tRNA gene intron. Probably assists in splicing its own and other chloroplast group II introns. The chain is Maturase K from Gratiola officinalis (Hedgehyssop).